Reading from the N-terminus, the 97-residue chain is ATP-dependent Clp protease adapter protein ClpS (97 aa).

This sequence belongs to the ClpS family. As to quaternary structure, binds to the N-terminal domain of the chaperone ClpA.

Functionally, involved in the modulation of the specificity of the ClpAP-mediated ATP-dependent protein degradation. The polypeptide is ATP-dependent Clp protease adapter protein ClpS (Nostoc sp. (strain PCC 7120 / SAG 25.82 / UTEX 2576)).